We begin with the raw amino-acid sequence, 400 residues long: CCA-adding enzyme (400 aa).

Residues G28 and R31 each coordinate ATP. The CTP site is built by G28 and R31. Mg(2+) is bound by residues D41 and D43. ATP contacts are provided by R112, D155, R158, R161, and R164. R112, D155, R158, R161, and R164 together coordinate CTP.

The protein belongs to the tRNA nucleotidyltransferase/poly(A) polymerase family. Bacterial CCA-adding enzyme type 3 subfamily. In terms of assembly, homodimer. Requires Mg(2+) as cofactor.

It catalyses the reaction a tRNA precursor + 2 CTP + ATP = a tRNA with a 3' CCA end + 3 diphosphate. The enzyme catalyses a tRNA with a 3' CCA end + 2 CTP + ATP = a tRNA with a 3' CCACCA end + 3 diphosphate. In terms of biological role, catalyzes the addition and repair of the essential 3'-terminal CCA sequence in tRNAs without using a nucleic acid template. Adds these three nucleotides in the order of C, C, and A to the tRNA nucleotide-73, using CTP and ATP as substrates and producing inorganic pyrophosphate. tRNA 3'-terminal CCA addition is required both for tRNA processing and repair. Also involved in tRNA surveillance by mediating tandem CCA addition to generate a CCACCA at the 3' terminus of unstable tRNAs. While stable tRNAs receive only 3'-terminal CCA, unstable tRNAs are marked with CCACCA and rapidly degraded. The polypeptide is CCA-adding enzyme (Staphylococcus haemolyticus (strain JCSC1435)).